The chain runs to 877 residues: Phosphoenolpyruvate carboxylase (877 aa).

Residues His-137 and Lys-544 contribute to the active site.

Belongs to the PEPCase type 1 family. It depends on Mg(2+) as a cofactor.

It catalyses the reaction oxaloacetate + phosphate = phosphoenolpyruvate + hydrogencarbonate. Functionally, forms oxaloacetate, a four-carbon dicarboxylic acid source for the tricarboxylic acid cycle. The protein is Phosphoenolpyruvate carboxylase of Edwardsiella ictaluri (strain 93-146).